A 227-amino-acid chain; its full sequence is Cytochrome c oxidase subunit 2 (227 aa).

At 1-14 (MAHAAQVGLQDATS) the chain is on the mitochondrial intermembrane side. The chain crosses the membrane as a helical span at residues 15–45 (PIMEELVIFHDHALMIIFLICFLVLYALFLT). Over 46–59 (LTTKLTNTSISDAQ) the chain is Mitochondrial matrix. The chain crosses the membrane as a helical span at residues 60–87 (EMETIWTILPAIILILIALPSLRILYLT). Residues 88–227 (DEINDPSFTI…IFEMGPVFTL (140 aa)) lie on the Mitochondrial intermembrane side of the membrane. 6 residues coordinate Cu cation: His161, Cys196, Glu198, Cys200, His204, and Met207. Glu198 is a Mg(2+) binding site.

The protein belongs to the cytochrome c oxidase subunit 2 family. Component of the cytochrome c oxidase (complex IV, CIV), a multisubunit enzyme composed of 14 subunits. The complex is composed of a catalytic core of 3 subunits MT-CO1, MT-CO2 and MT-CO3, encoded in the mitochondrial DNA, and 11 supernumerary subunits COX4I, COX5A, COX5B, COX6A, COX6B, COX6C, COX7A, COX7B, COX7C, COX8 and NDUFA4, which are encoded in the nuclear genome. The complex exists as a monomer or a dimer and forms supercomplexes (SCs) in the inner mitochondrial membrane with NADH-ubiquinone oxidoreductase (complex I, CI) and ubiquinol-cytochrome c oxidoreductase (cytochrome b-c1 complex, complex III, CIII), resulting in different assemblies (supercomplex SCI(1)III(2)IV(1) and megacomplex MCI(2)III(2)IV(2)). Found in a complex with TMEM177, COA6, COX18, COX20, SCO1 and SCO2. Interacts with TMEM177 in a COX20-dependent manner. Interacts with COX20. Interacts with COX16. It depends on Cu cation as a cofactor.

It is found in the mitochondrion inner membrane. The enzyme catalyses 4 Fe(II)-[cytochrome c] + O2 + 8 H(+)(in) = 4 Fe(III)-[cytochrome c] + 2 H2O + 4 H(+)(out). In terms of biological role, component of the cytochrome c oxidase, the last enzyme in the mitochondrial electron transport chain which drives oxidative phosphorylation. The respiratory chain contains 3 multisubunit complexes succinate dehydrogenase (complex II, CII), ubiquinol-cytochrome c oxidoreductase (cytochrome b-c1 complex, complex III, CIII) and cytochrome c oxidase (complex IV, CIV), that cooperate to transfer electrons derived from NADH and succinate to molecular oxygen, creating an electrochemical gradient over the inner membrane that drives transmembrane transport and the ATP synthase. Cytochrome c oxidase is the component of the respiratory chain that catalyzes the reduction of oxygen to water. Electrons originating from reduced cytochrome c in the intermembrane space (IMS) are transferred via the dinuclear copper A center (CU(A)) of subunit 2 and heme A of subunit 1 to the active site in subunit 1, a binuclear center (BNC) formed by heme A3 and copper B (CU(B)). The BNC reduces molecular oxygen to 2 water molecules using 4 electrons from cytochrome c in the IMS and 4 protons from the mitochondrial matrix. This chain is Cytochrome c oxidase subunit 2 (MT-CO2), found in Pongo abelii (Sumatran orangutan).